The primary structure comprises 255 residues: Small ribosomal subunit protein eS1 (255 aa).

A compositionally biased stretch (basic residues) spans 1–18; sequence MAVGKNKRLSKGKKGLKK. A disordered region spans residues 1 to 28; that stretch reads MAVGKNKRLSKGKKGLKKRTQDPFSRKD. The residue at position 2 (alanine 2) is an N-acetylalanine; partial. Residues 19–28 show a composition bias toward basic and acidic residues; sequence RTQDPFSRKD.

It belongs to the eukaryotic ribosomal protein eS1 family. As to quaternary structure, component of the small ribosomal subunit. Mature ribosomes consist of a small (40S) and a large (60S) subunit. The 40S subunit contains about 33 different proteins and 1 molecule of RNA (18S). The 60S subunit contains about 49 different proteins and 3 molecules of RNA (25S, 5.8S and 5S).

It localises to the cytoplasm. This Ajellomyces capsulatus (strain G186AR / H82 / ATCC MYA-2454 / RMSCC 2432) (Darling's disease fungus) protein is Small ribosomal subunit protein eS1.